Reading from the N-terminus, the 605-residue chain is Leucine-rich repeat-containing protein 40 (605 aa).

Residues 1–26 (MSRFRRGGKAPDPLSGFRAPKEQEPA) are disordered. 19 LRR repeats span residues 83–104 (DLTK…ISLL), 106–127 (ALVV…IKEL), 129–151 (NLQK…QHLQ), 152–173 (NLKS…IGHL), 175–196 (ILEE…VGQL), 198–219 (GLVK…IGKM), 221–242 (NLKQ…VAGM), 244–265 (SLEQ…PFLT), 266–287 (KLKE…HLQN), 290–311 (SLSV…ISLL), 313–335 (GLER…GSLP), 336–357 (NLKS…ILNK), 429–450 (FITT…IVEM), 453–475 (SVCD…CMLL), 476–497 (KLTH…MEAM), 499–520 (RLQS…LYRI), 522–543 (TLET…QLIK), 546–567 (KLST…LGNC), and 569–590 (SLRA…ILAK).

The chain is Leucine-rich repeat-containing protein 40 (lrrc40) from Xenopus tropicalis (Western clawed frog).